Consider the following 221-residue polypeptide: UPF0319 protein CGSHiEE_03630 (221 aa).

The first 21 residues, 1-21, serve as a signal peptide directing secretion; sequence MKLRAVVLGLATLCTSTATFA.

This sequence belongs to the UPF0319 family.

The protein is UPF0319 protein CGSHiEE_03630 of Haemophilus influenzae (strain PittEE).